Reading from the N-terminus, the 233-residue chain is Large ribosomal subunit protein uL1 (233 aa).

The protein belongs to the universal ribosomal protein uL1 family. In terms of assembly, part of the 50S ribosomal subunit.

Its function is as follows. Binds directly to 23S rRNA. The L1 stalk is quite mobile in the ribosome, and is involved in E site tRNA release. In terms of biological role, protein L1 is also a translational repressor protein, it controls the translation of the L11 operon by binding to its mRNA. The sequence is that of Large ribosomal subunit protein uL1 from Shewanella halifaxensis (strain HAW-EB4).